Reading from the N-terminus, the 288-residue chain is Ankyrin repeat and SOCS box protein 8 (288 aa).

The residue at position 17 (S17) is a Phosphoserine. ANK repeat units lie at residues 52 to 81 (GTLKPLHCACMVSDADCVELLLEKGAEVNA), 85 to 113 (YNRTALHYAAEKDEACVEVLLEYGANPNA), 117 to 146 (NRDTPLHWAAFKNNAECVRALLESGASVNA), and 150 to 179 (NNDTPLSWAAMKGNLESVSILLDYGAEVRV). The SOCS box domain occupies 235–288 (QLCEKLTVLCSAPGTLKTLSRYAVRRSLGLQYLPDAVKGLPLPASLKEYLLLIE).

It belongs to the ankyrin SOCS box (ASB) family. As to quaternary structure, interacts with TBK1; this interaction promotes TBK1 proteasomal degradation. In terms of processing, phosphorylated by TBK1.

It localises to the cytoplasm. It participates in protein modification; protein ubiquitination. May be a substrate-recognition component of a SCF-like ECS (Elongin-Cullin-SOCS-box protein) E3 ubiquitin-protein ligase complex which mediates the ubiquitination and subsequent proteasomal degradation of target proteins. Inhibits IFN-beta production through the IRF3 signaling pathway by targeting TBK1 via 'Lys-48'-linked ubiquitination, leading to its proteasomal degradation. The protein is Ankyrin repeat and SOCS box protein 8 (ASB8) of Bos taurus (Bovine).